The chain runs to 225 residues: NAD(P)H-quinone oxidoreductase subunit K, chloroplastic (225 aa).

Residues C43, C44, C108, and C139 each coordinate [4Fe-4S] cluster.

This sequence belongs to the complex I 20 kDa subunit family. In terms of assembly, NDH is composed of at least 16 different subunits, 5 of which are encoded in the nucleus. Requires [4Fe-4S] cluster as cofactor.

Its subcellular location is the plastid. It is found in the chloroplast thylakoid membrane. The enzyme catalyses a plastoquinone + NADH + (n+1) H(+)(in) = a plastoquinol + NAD(+) + n H(+)(out). It catalyses the reaction a plastoquinone + NADPH + (n+1) H(+)(in) = a plastoquinol + NADP(+) + n H(+)(out). Its function is as follows. NDH shuttles electrons from NAD(P)H:plastoquinone, via FMN and iron-sulfur (Fe-S) centers, to quinones in the photosynthetic chain and possibly in a chloroplast respiratory chain. The immediate electron acceptor for the enzyme in this species is believed to be plastoquinone. Couples the redox reaction to proton translocation, and thus conserves the redox energy in a proton gradient. The protein is NAD(P)H-quinone oxidoreductase subunit K, chloroplastic of Populus trichocarpa (Western balsam poplar).